A 145-amino-acid chain; its full sequence is MTLTNYVQEVSLADFGKPFHHKAYWNKRLKTTGGRFFPKDGHLDFNPRMLEENGELIFRKIVRHELCHYHLYFEGRGYHHKDRDFKDLLAQVNGLRYVPTSSKSKTNHHYSCQTCGQVYQRKRRINLAKYVCGNCHGKLIEKNQS.

The SprT-like domain occupies 4–140 (TNYVQEVSLA…VCGNCHGKLI (137 aa)). Residue H64 coordinates Zn(2+). E65 is an active-site residue. H68 serves as a coordination point for Zn(2+).

It belongs to the SprT family. Requires Zn(2+) as cofactor.

Its subcellular location is the cytoplasm. The sequence is that of Protein SprT-like from Streptococcus pyogenes serotype M6 (strain ATCC BAA-946 / MGAS10394).